Here is a 100-residue protein sequence, read N- to C-terminus: Integration host factor subunit alpha (100 aa).

Residues 53–73 (FDLRDKRQRPGRNPKTGEEIP) form a disordered region.

This sequence belongs to the bacterial histone-like protein family. Heterodimer of an alpha and a beta chain.

Functionally, this protein is one of the two subunits of integration host factor, a specific DNA-binding protein that functions in genetic recombination as well as in transcriptional and translational control. The sequence is that of Integration host factor subunit alpha from Pseudomonas aeruginosa (strain LESB58).